A 1093-amino-acid polypeptide reads, in one-letter code: Electroneutral sodium bicarbonate exchanger 1 (1093 aa).

Disordered regions lie at residues 1–25 (MPAAGSNEPDGVLSYQRPDEEAVVD) and 55–95 (PLGR…HDTP). Residues 1–478 (MPAAGSNEPD…DYRDALSLQC (478 aa)) are Extracellular-facing. The span at 59 to 77 (QSHRHHRTHGQKHRRRGRG) shows a compositional bias: basic residues. 2 residues coordinate Zn(2+): F167 and L169. The VTVLP; mediates dimerization signature appears at 340 to 344 (LFILL). Residues 479-499 (LASFLFLYCACMSPVITFGGL) form a helical membrane-spanning segment. Over 500–523 (LGEATEGRISAIESLFGASMTGIA) the chain is Cytoplasmic. Residues 524-544 (YSLFAGQALTILGSTGPVLVF) form a helical membrane-spanning segment. Residues 545–565 (EKILFKFCKDYALSYLSLRAC) lie on the Extracellular side of the membrane. The chain crosses the membrane as a helical span at residues 566–586 (IGLWTAFLCIVLVATDASSLV). Residues 587 to 595 (CYITRFTEE) are Cytoplasmic-facing. A helical membrane pass occupies residues 596–616 (AFASLICIIFIYEAIEKLIHL). At 617–687 (AETYPIHMHS…EFMGSACGHH (71 aa)) the chain is on the extracellular side. 2 disulfide bridges follow: C636/C684 and C638/C672. An N-linked (GlcNAc) asparagine glycan is attached at N646. The chain crosses the membrane as a helical span at residues 688-708 (GPYTPDVLFWSCILFFTTFIL). The Cytoplasmic portion of the chain corresponds to 709–731 (SSTLKTFKTSRYFPTRVRSMVSD). The helical transmembrane segment at 732-752 (FAVFLTIFTMVIIDFLIGVPS) threads the bilayer. The Extracellular segment spans residues 753–778 (PKLQVPSVFKPTRDDRGWIINPIGPN). A helical membrane pass occupies residues 779–799 (PWWTVIAAIIPALLCTILIFM). Over 800–824 (DQQITAVIINRKEHKLKKGCGYHLD) the chain is Cytoplasmic. A helical membrane pass occupies residues 825–845 (LLMVAIMLGVCSIMGLPWFVA). The Extracellular segment spans residues 846–881 (ATVLSITHVNSLKLESECSAPGEQPKFLGIREQRVT). The helical transmembrane segment at 882–902 (GLMIFVLMGCSVFMTAILKFI) threads the bilayer. Residues 903 to 904 (PM) are Cytoplasmic-facing. The helical transmembrane segment at 905–925 (PVLYGVFLYMGVSSLQGIQFF) threads the bilayer. Topologically, residues 926 to 962 (DRLKLFGMPAKHQPDFIYLRHVPLRKVHLFTLIQLTC) are extracellular. The helical transmembrane segment at 963-983 (LVLLWVIKASPAAIVFPMMVL) threads the bilayer. Residues 984-1093 (ALVFVRKVMD…GNAKEKSLFN (110 aa)) are Cytoplasmic-facing. The stretch at 1010–1036 (ESKKKKLDDAKKKAKEEEEAEKMLEIG) forms a coiled coil.

The protein belongs to the anion exchanger (TC 2.A.31) family. As to quaternary structure, homodimer. As to expression, expressed in the pyramidal cells of the hippocampus (at protein level). Highly expressed in all major regions of the brain, spinal column and in testis, and moderate levels in trachea, thyroid and medulla region of kidney. Low expression levels observed in pancreas and kidney cortex. Expressed in the brain. In terms of tissue distribution, expressed in the brain, heart and kidney.

The protein resides in the apical cell membrane. Its subcellular location is the basolateral cell membrane. The protein localises to the cytoplasmic vesicle. It localises to the secretory vesicle. It is found in the synaptic vesicle membrane. The protein resides in the cell membrane. It carries out the reaction 2 hydrogencarbonate(out) + chloride(in) + Na(+)(out) = 2 hydrogencarbonate(in) + chloride(out) + Na(+)(in). Its activity is regulated as follows. Activity is inhibited by 4,4'-Di-isothiocyanatostilbene-2,2'-disulfonic acid (DIDS - an inhibitor of several anion channels and transporters). Activity is inhibited by 4,4'-Di-isothiocyanatostilbene-2,2'-disulfonic acid (DIDS - an inhibitor of several anion channels and transporters). Zinc-binding negatively regulates its activity. Functionally, mediates electroneutral sodium- and carbonate-dependent chloride-HCO3(-) exchange with a Na(+):HCO3(-) stoichiometry of 2:1. Plays a major role in pH regulation in neurons. Mediates sodium reabsorption in the renal cortical collecting ducts. The sequence is that of Electroneutral sodium bicarbonate exchanger 1 from Homo sapiens (Human).